The chain runs to 244 residues: MKLNFSGLRALVTGAGKGIGRDTVKALHASGAKVVAVTRTNSDLVSLAKECPGIEPVCVDLGDWDATEKALGGIGPVDLLVNNAALVIMQPFLEVTKEAFDRSFSVNLRSVFQVSQMVARDMINRGVPGSIVNVSSMVAHVTFPNLITYSSTKGAMTMLTKAMAMELGPHKIRVNSVNPTVVLTDMGKKVSADPEFARKLKERHPLRKFAEVEDVVNSILFLLSDRSASTSGGGILVDAGYLAS.

Position 11–39 (Leu-11–Arg-39) interacts with NADP(+). Ser-42 carries the phosphoserine modification. Ser-136 serves as a coordination point for substrate. Residue Tyr-149 is the Proton acceptor of the active site. At Ser-176 the chain carries Phosphoserine.

Belongs to the short-chain dehydrogenases/reductases (SDR) family. Homotetramer. Predominantly expressed in lung, in ciliated cells, non-ciliated bronchiolar cells and type-II alveolar pneumocytes. Also detected in adipose tissue (at protein level). Low expression in testis, heart, kidney, spleen, brain and liver.

It localises to the mitochondrion matrix. It carries out the reaction a secondary alcohol + NADP(+) = a ketone + NADPH + H(+). Functionally, may function in the pulmonary metabolism of endogenous carbonyl compounds, such as aliphatic aldehydes and ketones derived from lipid peroxidation, 3-ketosteroids and fatty aldehydes, as well as in xenobiotic metabolism. This chain is Carbonyl reductase [NADPH] 2 (Cbr2), found in Mus musculus (Mouse).